The following is a 1022-amino-acid chain: Protein translocase subunit SecA (1022 aa).

Residues glutamine 143, glycine 161–threonine 165, and aspartate 661 contribute to the ATP site. A disordered region spans residues alanine 973–arginine 1001. 4 residues coordinate Zn(2+): cysteine 1005, cysteine 1007, cysteine 1016, and histidine 1017.

This sequence belongs to the SecA family. In terms of assembly, monomer and homodimer. Part of the essential Sec protein translocation apparatus which comprises SecA, SecYEG and auxiliary proteins SecDF. Other proteins may also be involved. It depends on Zn(2+) as a cofactor.

It localises to the cell inner membrane. It is found in the cytoplasm. It catalyses the reaction ATP + H2O + cellular proteinSide 1 = ADP + phosphate + cellular proteinSide 2.. Functionally, part of the Sec protein translocase complex. Interacts with the SecYEG preprotein conducting channel. Has a central role in coupling the hydrolysis of ATP to the transfer of proteins into and across the cell membrane, serving as an ATP-driven molecular motor driving the stepwise translocation of polypeptide chains across the membrane. The chain is Protein translocase subunit SecA from Chlorobium phaeobacteroides (strain DSM 266 / SMG 266 / 2430).